The primary structure comprises 382 residues: MSNRHLPIGTRDEFGPRAIRKENLIQTISQQFIQAGFERVKTPLLEYRDVFKPLAVSGEQPYQMLDDAGESVVMRPDLTLPLARLLSTTSIVPPVQWWYVGDIFRVKKSLSGTYNQITQAGIELIGYRSLKAEWACLSEAGKICRTLGLTHLTLELSDAQFVPQILRTLQLNDAAADAFQTAFFAKELSTYQNLIAPLATNPLYPFLQQWPWLFGDSETIFAELKRLLPSNVITDRLAPLQQTVAFLKDQFPELRVTIDLTSRPPQSYYTGIFFHAYVDGGHQYLFSGGRYDKLLASFQQELLPAVGLAFDIDAVTDQLPNAPDQPLTFVYGLPSQWQAAAAMVATTPNARLCLVDTLAEAQAAATKQHANLIDLSPKEAIL.

Belongs to the class-II aminoacyl-tRNA synthetase family. HisZ subfamily. In terms of assembly, heteromultimer composed of HisG and HisZ subunits.

The protein resides in the cytoplasm. It participates in amino-acid biosynthesis; L-histidine biosynthesis; L-histidine from 5-phospho-alpha-D-ribose 1-diphosphate: step 1/9. Required for the first step of histidine biosynthesis. May allow the feedback regulation of ATP phosphoribosyltransferase activity by histidine. This is ATP phosphoribosyltransferase regulatory subunit from Lacticaseibacillus casei (strain BL23) (Lactobacillus casei).